We begin with the raw amino-acid sequence, 200 residues long: Rho GDP-dissociation inhibitor 2 (200 aa).

The tract at residues 1 to 39 (MTEKDAQPQLEEADDDLDSKLNYKPPPQKSLKELQEMDK) is disordered. Residue T2 is modified to N-acetylthreonine. K20 is modified (N6-acetyllysine). Phosphotyrosine is present on Y23. N6-acetyllysine occurs at positions 24, 39, 46, 101, and 123. Residues 30 to 39 (SLKELQEMDK) show a composition bias toward basic and acidic residues. S144 carries the post-translational modification Phosphoserine. K174 carries the post-translational modification N6-acetyllysine.

It belongs to the Rho GDI family. In terms of assembly, interacts with RHOA. Interacts with RAC1. Interacts with RAC2. Interacts with CDC42. As to expression, preferentially expressed in hematopoietic cells.

The protein localises to the cytoplasm. It is found in the cytosol. Its function is as follows. Regulates the GDP/GTP exchange reaction of the Rho proteins by inhibiting the dissociation of GDP from them, and the subsequent binding of GTP to them. Regulates reorganization of the actin cytoskeleton mediated by Rho family members. The protein is Rho GDP-dissociation inhibitor 2 (Arhgdib) of Mus musculus (Mouse).